Here is a 382-residue protein sequence, read N- to C-terminus: 3-dehydroquinate synthase (382 aa).

Residues 115 to 119 (GVVGD), 139 to 140 (TS), lysine 152, and lysine 161 contribute to the NAD(+) site. Zn(2+)-binding residues include glutamate 194, histidine 256, and histidine 274.

The protein belongs to the sugar phosphate cyclases superfamily. Dehydroquinate synthase family. Co(2+) serves as cofactor. The cofactor is Zn(2+). It depends on NAD(+) as a cofactor.

The protein localises to the cytoplasm. It catalyses the reaction 7-phospho-2-dehydro-3-deoxy-D-arabino-heptonate = 3-dehydroquinate + phosphate. The protein operates within metabolic intermediate biosynthesis; chorismate biosynthesis; chorismate from D-erythrose 4-phosphate and phosphoenolpyruvate: step 2/7. Catalyzes the conversion of 3-deoxy-D-arabino-heptulosonate 7-phosphate (DAHP) to dehydroquinate (DHQ). The polypeptide is 3-dehydroquinate synthase (Rhodopseudomonas palustris (strain BisB18)).